Here is an 80-residue protein sequence, read N- to C-terminus: Large ribosomal subunit protein bL31B (80 aa).

The protein belongs to the bacterial ribosomal protein bL31 family. Type B subfamily. Part of the 50S ribosomal subunit.

This Xanthomonas axonopodis pv. citri (strain 306) protein is Large ribosomal subunit protein bL31B.